A 245-amino-acid chain; its full sequence is Adenylate kinase (245 aa).

Residue 15-20 (GSGKGT) participates in ATP binding. Residues 35-64 (SSGDLLRGAVSKDTPLSQEIKSYLDQGKLL) are NMP. AMP-binding positions include S36, R41, 62–64 (KLL), 103–106 (GFPR), and Q110. Residues 143–176 (SRYICPACQGIYNEQQGFSSCPKCSVELIRRSDD) form an LID region. R144 contacts ATP. Zn(2+) is bound by residues C147 and C150. 153 to 154 (IY) contributes to the ATP binding site. Zn(2+) contacts are provided by C163 and C166. AMP contacts are provided by R173 and R184. A212 serves as a coordination point for ATP.

The protein belongs to the adenylate kinase family. As to quaternary structure, monomer.

The protein resides in the cytoplasm. The enzyme catalyses AMP + ATP = 2 ADP. It functions in the pathway purine metabolism; AMP biosynthesis via salvage pathway; AMP from ADP: step 1/1. Functionally, catalyzes the reversible transfer of the terminal phosphate group between ATP and AMP. Plays an important role in cellular energy homeostasis and in adenine nucleotide metabolism. The protein is Adenylate kinase of Chlamydia trachomatis serovar L2 (strain ATCC VR-902B / DSM 19102 / 434/Bu).